Consider the following 1914-residue polypeptide: MADGKGDAAAVAGAGAEAPAVAGAGDGVETESMVRGHRPVSPAPGASGLRPCLWQLETELREQEVSEVSSLNYCRSFCQTLLQYASNKNASEHIVYLLEVYRLAIQSFASARPYLTTECEDVLLVLGRLVLSCFELLLSVSESELPCEVWLPFLQSLQESHDALLEFGNNNLQILVHVTKEGVWKNPVLLKILSQQPVETEEVNKLIAQEGPSFLQMRIKHLLKSNCIPQATALSKLCAESKEISNVSSFQQAYITCLCSMLPNEDAIKEIAKVDCKEVLDIICNLESEGQDNTAFVLCTTYLTQQLQTASVYCSWELTLFWSKLQRRIDPSLDTFLERCRQFGVIAKTQQHLFCLIRVIQTEAQDAGLGVSILLCVRALQLRSSEDEEMKASVCKTIACLLPEDLEVRRACQLTEFLIEPSLDGFNMLEELYLQPDQKFDEENAPVPNSLRCELLLALKAHWPFDPEFWDWKTLKRHCHQLLGQEASDSDDDLSGYEMSINDTDVLESFLSDYDEGKEDKQYRRRDLTDQHKEKRDKKPIGSSERYQRWLQYKFFCLLCKRECIEARILHHSKMHMEDGIYTCPVCIKKFKRKEMFVPHVMEHVKMPPSRRDRSKKKLLLKGSQKGICPKSPSAIPEQNHSLNDQAKGESHEYVTFSKLEDCHLQDRDLYPCPGTDCSRVFKQFKYLSVHLKAEHQNNDENAKHYLDMKNRREKCTYCRRHFMSAFHLREHEQVHCGPQPYMCVSIDCYARFGSVNELLNHKQKHDDLRYKCELNGCNIVFSDLGQLYHHEAQHFRDASYTCNFLGCKKFYYSKIEYQNHLSMHNVENSNGDIKKSVKLEESATGEKQDCINQPHLLNQTDKSHLPEDLFCAESANSQIDTETAENLKENSDSNSSDQLSHSSSASMNEELIDTLDHSETMQDVLLSNEKVFGPSSLKEKCSSMAVCFDGTKFTCGFDGCGSTYKNARGMQKHLRKVHPYHFKPKKIKTKDLFPSLGNEHNQTTEKLDAEPKPCSDTNSDSPDEGLDHNIHIKCKREHQGYSSESSICASKRPCTEDTMLELLLRLKHLSLKNSITHGSFSGSLQGYPSSGAKSLQSVSSISDLNFQNQDENMPSQYLAQLAAKPFFCELQGCKYEFVTREALLMHYLKKHNYSKEKVLQLTMFQHRYSPFQCHICQRSFTRKTHLRIHYKNKHQIGSDRATHKLLDNEKCDHEGPCSVDRLKGDCSAELGGDPSSNSEKPHCHPKKDECSSETDLESSCEETESKTSDISSPIGSHREEQEGREGRGSRRTVAKGNLCYILNKYHKPFHCIHKTCNSSFTNLKGLIRHYRTVHQYNKEQLCLEKDKARTKRELVKCKKIFACKYKECNKRFLCSKALAKHCSDSHNLDHIEEPKVLSEAGSAARFSCNQPQCPAVFYTFNKLKHHLMEQHNIEGEIHSDYEIHCDLNGCGQIFTHRSNYSQHVYYRHKDYYDDLFRSQKVANERLLRSEKVCQTADTQGHEHQTTRRSFNAKSKKCGLIKEKKAPISFKTRAEALHMCVEHSEHTQYPCMVQGCLSVVKLESSIVRHYKRTHQMSSAYLEQQMENLVVCVKYGTKIKEEPPSEADPCIKKEENRSCESERTEHSHSPGDSSAPIQNTDCCHSSERDGGQKGCIESSSVFDADTLLYRGTLKCNHSSKTTSLEQCNIVQPPPPCKIENSIPNPNGTESGTYFTSFQLPLPRIKESETRQHSSGQENTVKNPTHVPKENFRKHSQPRSFDLKTYKPMGFESSFLKFIQESEEKEDDFDDWEPSEHLTLSNSSQSSNDLTGNVVANNMVNDSEPEVDIPHSSSDSTIHENLTAIPPLIVAETTTVPSLENLRVVLDKALTDCGELALKQLHYLRPVVVLERSKFSTPILDLFPTKKTDELCVGSS.

Ser41 carries the phosphoserine modification. Positions Lys521–Pro540 are enriched in basic and acidic residues. Positions Lys521–Ile541 are disordered. Residues Tyr582–His604 form a C2H2-type 1 zinc finger. Lys622 is covalently cross-linked (Glycyl lysine isopeptide (Lys-Gly) (interchain with G-Cter in SUMO2)). Phosphoserine occurs at positions 632 and 634. C2H2-type zinc fingers lie at residues Tyr671 to His696, Glu714 to His736, Tyr742 to His766, Tyr771 to His795, and Tyr801 to His825. Residue Lys839 forms a Glycyl lysine isopeptide (Lys-Gly) (interchain with G-Cter in SUMO2) linkage. Residues Thr882–Ser907 form a disordered region. The segment covering Asp893–Ser907 has biased composition (low complexity). Residues Phe954–His979 form a C2H2-type 7 zinc finger. Residues Leu993–Asp1028 form a disordered region. Over residues Gln1003 to Pro1014 the composition is skewed to basic and acidic residues. C2H2-type zinc fingers lie at residues Phe1127–His1152 and Phe1172–His1195. A disordered region spans residues Leu1231–Ser1290. Residues Glu1240–Cys1251 are compositionally biased toward basic and acidic residues. Residues Ser1252 to Glu1263 are compositionally biased toward acidic residues. Residues Ser1277–Gly1289 show a composition bias toward basic and acidic residues. 5 consecutive C2H2-type zinc fingers follow at residues Phe1310–His1335, Phe1362–His1387, Phe1407–His1432, Ile1444–His1469, and Tyr1549–His1574. Residue Lys1423 forms a Glycyl lysine isopeptide (Lys-Gly) (interchain with G-Cter in SUMO2) linkage. Residues Lys1599 and Lys1611 each participate in a glycyl lysine isopeptide (Lys-Gly) (interchain with G-Cter in SUMO2) cross-link. The segment at Ser1620–Cys1654 is disordered. Residues Pro1629–Cys1642 are compositionally biased toward polar residues. Lys1696 participates in a covalent cross-link: Glycyl lysine isopeptide (Lys-Gly) (interchain with G-Cter in SUMO2). The disordered stretch occupies residues Glu1725–Arg1757. Residues His1731–Asn1741 are compositionally biased toward polar residues. Lys1762 is covalently cross-linked (Glycyl lysine isopeptide (Lys-Gly) (interchain with G-Cter in SUMO2)). Positions Lys1783–Asp1807 are disordered. Residues Leu1796–Asp1807 are compositionally biased toward polar residues.

Belongs to the krueppel C2H2-type zinc-finger protein family. Interacts with RIT1 and RIT2. As to expression, widely expressed in fetal and adult tissues.

The protein resides in the nucleus. Its function is as follows. May be involved in transcriptional regulation. This Homo sapiens (Human) protein is Zinc finger protein Rlf (RLF).